The sequence spans 490 residues: Metalloreductase STEAP2 (490 aa).

Residues 38-41 (SGDF), 60-61 (SR), 93-100 (IHREHYTS), Asn118, and Ala151 each bind NADP(+). FAD is bound by residues Trp152 and Asp160. The helical transmembrane segment at 208–228 (LFTLWRGPVVVAISLATFFFL) threads the bilayer. Tyr229 is a binding site for Fe(3+). The helical transmembrane segment at 259-279 (LPIVAITLLSLVYLAGLLAAA) threads the bilayer. The 149-residue stretch at 259-407 (LPIVAITLLS…LGYVALLIST (149 aa)) folds into the Ferric oxidoreductase domain. FAD is bound by residues Gln281 and Arg302. The next 4 helical transmembrane spans lie at 305-325 (LGLL…CLPM), 359-379 (MYIS…VTSI), 393-413 (FIQS…VLIY), and 432-452 (FVLA…LFLP). His316 contacts heme b. Fe(3+) is bound at residue Tyr319. The FAD site is built by Ser378 and Gln395. His409 provides a ligand contact to heme b. Ser483 is modified (phosphoserine).

Belongs to the STEAP family. FAD serves as cofactor. Requires heme b as cofactor. In terms of tissue distribution, expressed at high levels in prostate and at significantly lower levels in heart, brain, kidney, pancreas, and ovary.

It is found in the endosome membrane. The protein localises to the cell membrane. The catalysed reaction is 2 Fe(2+) + NADP(+) + H(+) = 2 Fe(3+) + NADPH. The enzyme catalyses 2 Cu(+) + NADP(+) + H(+) = 2 Cu(2+) + NADPH. Functionally, integral membrane protein that functions as a NADPH-dependent ferric-chelate reductase, using NADPH from one side of the membrane to reduce a Fe(3+) chelate that is bound on the other side of the membrane. Mediates sequential transmembrane electron transfer from NADPH to FAD and onto heme, and finally to the Fe(3+) chelate. Can also reduce Cu(2+) to Cu(1+). In Homo sapiens (Human), this protein is Metalloreductase STEAP2 (STEAP2).